A 353-amino-acid polypeptide reads, in one-letter code: Photosystem II D2 protein (353 aa).

Thr2 bears the N-acetylthreonine mark. Thr2 is subject to Phosphothreonine. A helical transmembrane segment spans residues 41-61; that stretch reads CAYFALGGWFTGTTFVTSWYT. His118 lines the chlorophyll a pocket. A helical transmembrane segment spans residues 125–141; the sequence is GFMLRQFELARSVQLRP. Residues Gln130 and Asn143 each contribute to the pheophytin a site. The chain crosses the membrane as a helical span at residues 153 to 166; that stretch reads VFISVFFIYPLGQS. His198 is a chlorophyll a binding site. The helical transmembrane segment at 208–228 threads the bilayer; that stretch reads AALLCAIHGATVENTLFEDGD. 2 residues coordinate a plastoquinone: His215 and Phe262. His215 provides a ligand contact to Fe cation. Position 269 (His269) interacts with Fe cation. The chain crosses the membrane as a helical span at residues 279–295; that stretch reads GLWMSALGVVGLALNLR.

It belongs to the reaction center PufL/M/PsbA/D family. PSII is composed of 1 copy each of membrane proteins PsbA, PsbB, PsbC, PsbD, PsbE, PsbF, PsbH, PsbI, PsbJ, PsbK, PsbL, PsbM, PsbT, PsbX, PsbY, PsbZ, Psb30/Ycf12, at least 3 peripheral proteins of the oxygen-evolving complex and a large number of cofactors. It forms dimeric complexes. It depends on The D1/D2 heterodimer binds P680, chlorophylls that are the primary electron donor of PSII, and subsequent electron acceptors. It shares a non-heme iron and each subunit binds pheophytin, quinone, additional chlorophylls, carotenoids and lipids. There is also a Cl(-1) ion associated with D1 and D2, which is required for oxygen evolution. The PSII complex binds additional chlorophylls, carotenoids and specific lipids. as a cofactor.

It is found in the plastid membrane. It catalyses the reaction 2 a plastoquinone + 4 hnu + 2 H2O = 2 a plastoquinol + O2. In terms of biological role, photosystem II (PSII) is a light-driven water:plastoquinone oxidoreductase that uses light energy to abstract electrons from H(2)O, generating O(2) and a proton gradient subsequently used for ATP formation. It consists of a core antenna complex that captures photons, and an electron transfer chain that converts photonic excitation into a charge separation. The D1/D2 (PsbA/PsbD) reaction center heterodimer binds P680, the primary electron donor of PSII as well as several subsequent electron acceptors. D2 is needed for assembly of a stable PSII complex. This Cuscuta reflexa (Southern Asian dodder) protein is Photosystem II D2 protein.